Here is a 127-residue protein sequence, read N- to C-terminus: MFQAAGAAQATPSHDAKGGGSSTVQRSKSFSLRAQVKETCAACQKTVYPMERLVADKLIFHNSCFCCKHCHTKLSLGSYAALHGEFYCKPHFQQLFKSKGNYDEGFGRKQHKELWAHKEVDPGTKTA.

Methionine 1 is modified (N-acetylmethionine). Positions 1–24 (MFQAAGAAQATPSHDAKGGGSSTV) are disordered. The LIM zinc-binding domain maps to 38 to 98 (ETCAACQKTV…KPHFQQLFKS (61 aa)). Cysteine 40, cysteine 43, histidine 61, cysteine 64, cysteine 67, cysteine 70, cysteine 88, and histidine 91 together coordinate Zn(2+).

In terms of assembly, interacts with ILK.

It is found in the cytoplasm. The protein resides in the nucleus. Functionally, acts as an activator of the protein-kinase ILK, thereby regulating cell motility. The chain is LIM domain-containing protein 2 from Homo sapiens (Human).